The primary structure comprises 131 residues: Fumarate reductase subunit C (131 aa).

3 consecutive transmembrane segments (helical) span residues 30-50 (EGTA…LFAL), 57-77 (WMGF…LITL), and 109-129 (IIKG…YVAL).

This sequence belongs to the FrdC family. As to quaternary structure, part of an enzyme complex containing four subunits: a flavoprotein (FrdA), an iron-sulfur protein (FrdB), and two hydrophobic anchor proteins (FrdC and FrdD).

The protein localises to the cell inner membrane. Two distinct, membrane-bound, FAD-containing enzymes are responsible for the catalysis of fumarate and succinate interconversion; fumarate reductase is used in anaerobic growth, and succinate dehydrogenase is used in aerobic growth. Anchors the catalytic components of the fumarate reductase complex to the cell inner membrane, binds quinones. The polypeptide is Fumarate reductase subunit C (Salmonella choleraesuis (strain SC-B67)).